Here is a 508-residue protein sequence, read N- to C-terminus: Photosystem II CP47 reaction center protein (508 aa).

6 consecutive transmembrane segments (helical) span residues 21–36 (SVHIMHTALVAGWAGS), 101–115 (IVFSGLCFLAAIWHW), 140–156 (GIHLFLAGVACFGFGAF), 203–218 (IAAGTLGILAGLFHLS), 237–252 (VLSSSIAAVFFAAFVV), and 457–472 (SFALLFFFGHIWHGAR).

Belongs to the PsbB/PsbC family. PsbB subfamily. PSII is composed of 1 copy each of membrane proteins PsbA, PsbB, PsbC, PsbD, PsbE, PsbF, PsbH, PsbI, PsbJ, PsbK, PsbL, PsbM, PsbT, PsbX, PsbY, PsbZ, Psb30/Ycf12, at least 3 peripheral proteins of the oxygen-evolving complex and a large number of cofactors. It forms dimeric complexes. It depends on Binds multiple chlorophylls. PSII binds additional chlorophylls, carotenoids and specific lipids. as a cofactor.

It localises to the plastid. Its subcellular location is the chloroplast thylakoid membrane. Its function is as follows. One of the components of the core complex of photosystem II (PSII). It binds chlorophyll and helps catalyze the primary light-induced photochemical processes of PSII. PSII is a light-driven water:plastoquinone oxidoreductase, using light energy to abstract electrons from H(2)O, generating O(2) and a proton gradient subsequently used for ATP formation. The sequence is that of Photosystem II CP47 reaction center protein from Lactuca sativa (Garden lettuce).